Here is a 443-residue protein sequence, read N- to C-terminus: Probable D-serine dehydratase (443 aa).

Lys116 bears the N6-(pyridoxal phosphate)lysine mark.

Belongs to the serine/threonine dehydratase family. DsdA subfamily. Pyridoxal 5'-phosphate serves as cofactor.

The catalysed reaction is D-serine = pyruvate + NH4(+). The protein is Probable D-serine dehydratase of Bacillus cereus (strain G9842).